The primary structure comprises 87 residues: Acylphosphatase (87 aa).

Residues 1 to 87 form the Acylphosphatase-like domain; it reads MAWVHGRVQG…EDYQDFRIRY (87 aa). Catalysis depends on residues Arg14 and Asn32.

It belongs to the acylphosphatase family.

It catalyses the reaction an acyl phosphate + H2O = a carboxylate + phosphate + H(+). The sequence is that of Acylphosphatase (acyP) from Cronobacter sakazakii (strain ATCC BAA-894) (Enterobacter sakazakii).